The primary structure comprises 267 residues: Pro-opiomelanocortin (267 aa).

Residues 1–26 (MPRLCGSRSGALLLTLLLQASMGVRG) form the signal peptide. F87 carries the post-translational modification Phenylalanine amide. 2 disordered regions span residues 88-156 (GRRN…RPVK) and 215-242 (KKDE…GFMT). A glycan (N-linked (GlcNAc...) asparagine) is linked at N91. Gly residues predominate over residues 94 to 105 (SSGGGGGGGGAG). Positions 109–133 (EEEEVAAGEGPGPRGDGVAPGPRQD) are excised as a propeptide. The span at 131–143 (RQDKRSYSMEHFR) shows a compositional bias: basic and acidic residues. S136 is modified (N-acetylserine; in Corticotropin). V148 bears the Valine amide mark. The segment covering 215 to 237 (KKDEGPYKMEHFRWGSPPKDKRY) has biased composition (basic and acidic residues).

It belongs to the POMC family. Specific enzymatic cleavages at paired basic residues yield the different active peptides. As to expression, ACTH and MSH are produced by the pituitary gland.

It is found in the secreted. In terms of biological role, stimulates the adrenal glands to release cortisol. Its function is as follows. Anorexigenic peptide. Increases the pigmentation of skin by increasing melanin production in melanocytes. Increases the pigmentation of skin by increasing melanin production in melanocytes. Functionally, endogenous orexigenic opiate. In terms of biological role, endogenous opiate. This chain is Pro-opiomelanocortin (POMC), found in Sus scrofa (Pig).